Reading from the N-terminus, the 105-residue chain is Small ribosomal subunit protein eS24 (105 aa).

The protein belongs to the eukaryotic ribosomal protein eS24 family.

This is Small ribosomal subunit protein eS24 from Haloquadratum walsbyi (strain DSM 16790 / HBSQ001).